The chain runs to 80 residues: Putative DNA-directed RNA polymerase subunit omega (80 aa).

This sequence belongs to the RNA polymerase subunit omega family.

Its subcellular location is the plastid. The protein resides in the chloroplast. It catalyses the reaction RNA(n) + a ribonucleoside 5'-triphosphate = RNA(n+1) + diphosphate. In terms of biological role, may be involved in RNA polymerase activity. The sequence is that of Putative DNA-directed RNA polymerase subunit omega from Gracilaria tenuistipitata var. liui (Red alga).